The chain runs to 424 residues: Phosphomethylpyrimidine synthase (424 aa).

Substrate-binding positions include methionine 94, tyrosine 123, histidine 162, 184–186 (SRG), 225–228 (NGMR), and glutamate 264. Zn(2+) is bound at residue histidine 268. Tyrosine 291 provides a ligand contact to substrate. Histidine 332 lines the Zn(2+) pocket. [4Fe-4S] cluster contacts are provided by cysteine 406, cysteine 409, and cysteine 413.

Belongs to the ThiC family. It depends on [4Fe-4S] cluster as a cofactor.

It carries out the reaction 5-amino-1-(5-phospho-beta-D-ribosyl)imidazole + S-adenosyl-L-methionine = 4-amino-2-methyl-5-(phosphooxymethyl)pyrimidine + CO + 5'-deoxyadenosine + formate + L-methionine + 3 H(+). Its pathway is cofactor biosynthesis; thiamine diphosphate biosynthesis. Functionally, catalyzes the synthesis of the hydroxymethylpyrimidine phosphate (HMP-P) moiety of thiamine from aminoimidazole ribotide (AIR) in a radical S-adenosyl-L-methionine (SAM)-dependent reaction. The protein is Phosphomethylpyrimidine synthase of Methanosphaerula palustris (strain ATCC BAA-1556 / DSM 19958 / E1-9c).